The sequence spans 421 residues: Mannose-1-phosphate guanylyltransferase regulatory subunit alpha (421 aa).

The tract at residues 2–252 (LKAVILIGGP…EGCWSQIKSA (251 aa)) is substrate-binding domain. E85 and Q248 together coordinate GDP-alpha-D-mannose. A hexapeptide repeat domain region spans residues 274–421 (LASTKEGGPT…SRSFKNQIIL (148 aa)). The segment at 357-385 (TPSDPNPNDPYSKIDSETLFREGKLTPSI) is C-loop.

This sequence belongs to the transferase hexapeptide repeat family. As to quaternary structure, component of the GMPPA-GMPPB mannose-1-phosphate guanylyltransferase complex composed of 4 gmppa subunits and 8 gmppb subunits; the complex is organized into three layers, a central layer made up of 2 gmppa dimers sandwiched between two layers each made up of 2 gmppb dimers.

It localises to the cytoplasm. Its function is as follows. Regulatory subunit of the GMPPA-GMPPB mannose-1-phosphate guanylyltransferase complex; reduces the catalytic activity of GMPPB when part of the complex. Mediates allosteric feedback inhibition of GMPPB catalytic activity upon binding GDP-alpha-D-mannose. Together with GMPPB regulates GDP-alpha-D-mannose levels. In Xenopus tropicalis (Western clawed frog), this protein is Mannose-1-phosphate guanylyltransferase regulatory subunit alpha (gmppa).